Consider the following 447-residue polypeptide: Na(+)-translocating NADH-quinone reductase subunit A (447 aa).

This sequence belongs to the NqrA family. In terms of assembly, composed of six subunits; NqrA, NqrB, NqrC, NqrD, NqrE and NqrF.

It carries out the reaction a ubiquinone + n Na(+)(in) + NADH + H(+) = a ubiquinol + n Na(+)(out) + NAD(+). In terms of biological role, NQR complex catalyzes the reduction of ubiquinone-1 to ubiquinol by two successive reactions, coupled with the transport of Na(+) ions from the cytoplasm to the periplasm. NqrA to NqrE are probably involved in the second step, the conversion of ubisemiquinone to ubiquinol. The polypeptide is Na(+)-translocating NADH-quinone reductase subunit A (Photorhabdus laumondii subsp. laumondii (strain DSM 15139 / CIP 105565 / TT01) (Photorhabdus luminescens subsp. laumondii)).